The following is a 341-amino-acid chain: Elongation factor Ts, mitochondrial 2 (341 aa).

A mitochondrion-targeting transit peptide spans 1 to 17; sequence MLAARFASRAFPRTRLY.

Belongs to the EF-Ts family.

The protein resides in the mitochondrion. Functionally, associates with the EF-Tu.GDP complex and induces the exchange of GDP to GTP. It remains bound to the aminoacyl-tRNA.EF-Tu.GTP complex up to the GTP hydrolysis stage on the ribosome. The polypeptide is Elongation factor Ts, mitochondrial 2 (Postia placenta (strain ATCC 44394 / Madison 698-R) (Brown rot fungus)).